The chain runs to 116 residues: Omega-ctenitoxin-Pn3a (116 aa).

The first 19 residues, 1-19 (MKMKLLGIILLVSFPFVLG), serve as a signal peptide directing secretion. Positions 20 to 38 (FAGIPIEEGENSVEVGEVE) are excised as a propeptide. Cystine bridges form between C41–C58, C48–C64, C55–C90, C57–C78, C66–C76, C96–C102, and C106–C111. Residue H115 is modified to Histidine amide.

Belongs to the neurotoxin 04 (omega-agtx) family. 03 (type II/III omega-agtx) subfamily. Expressed by the venom gland.

The protein resides in the secreted. Functionally, this toxin is a potent and practically irreversible antagonist of both Cav2.1/CACNA1A and Cav2.2/CACNA1B calcium channels, while it displays a partial and rapidly reversible block of Cav2.3/CACNA1E calcium channels and no effect on Cav3/CACNA1 calcium channels. Inhibits glutamate uptake from rat brain synaptosomes by an interaction between cysteines from both glutamate transporter and toxin. Blocks potassium-induced exocytosis of synaptic vesicles in brain cortical synaptosomes (IC(50)=1.1 nM). In rat brain, inhibits glutamate release, neuronal death and loss of neurotransmission in the hippocampus resulting from ischemia. In vivo, induces rapid general flaccid paralysis followed by death in 10-30 minutes at dose levels of 5 ug per mouse. This Phoneutria nigriventer (Brazilian armed spider) protein is Omega-ctenitoxin-Pn3a.